A 174-amino-acid chain; its full sequence is Ribosome maturation factor RimM (174 aa).

Positions 98–171 constitute a PRC barrel domain; sequence EGEFYFHQII…TIHIEVMEGL (74 aa).

This sequence belongs to the RimM family. Binds ribosomal protein uS19.

It localises to the cytoplasm. Functionally, an accessory protein needed during the final step in the assembly of 30S ribosomal subunit, possibly for assembly of the head region. Essential for efficient processing of 16S rRNA. May be needed both before and after RbfA during the maturation of 16S rRNA. It has affinity for free ribosomal 30S subunits but not for 70S ribosomes. This Bacillus pumilus (strain SAFR-032) protein is Ribosome maturation factor RimM.